Consider the following 450-residue polypeptide: tRNA-2-methylthio-N(6)-dimethylallyladenosine synthase (450 aa).

Residues 2–119 (KKVFVKTYGC…LPDLIARRQR (118 aa)) form the MTTase N-terminal domain. 6 residues coordinate [4Fe-4S] cluster: cysteine 11, cysteine 48, cysteine 82, cysteine 156, cysteine 160, and cysteine 163. The 234-residue stretch at 142 to 375 (RVEGPSAFVS…QATIEENVQR (234 aa)) folds into the Radical SAM core domain. Residues 378 to 448 (QNMVGTVQRI…PHSLRGEIVV (71 aa)) enclose the TRAM domain.

This sequence belongs to the methylthiotransferase family. MiaB subfamily. In terms of assembly, monomer. Requires [4Fe-4S] cluster as cofactor.

The protein localises to the cytoplasm. The enzyme catalyses N(6)-dimethylallyladenosine(37) in tRNA + (sulfur carrier)-SH + AH2 + 2 S-adenosyl-L-methionine = 2-methylsulfanyl-N(6)-dimethylallyladenosine(37) in tRNA + (sulfur carrier)-H + 5'-deoxyadenosine + L-methionine + A + S-adenosyl-L-homocysteine + 2 H(+). Catalyzes the methylthiolation of N6-(dimethylallyl)adenosine (i(6)A), leading to the formation of 2-methylthio-N6-(dimethylallyl)adenosine (ms(2)i(6)A) at position 37 in tRNAs that read codons beginning with uridine. This chain is tRNA-2-methylthio-N(6)-dimethylallyladenosine synthase, found in Cupriavidus necator (strain ATCC 17699 / DSM 428 / KCTC 22496 / NCIMB 10442 / H16 / Stanier 337) (Ralstonia eutropha).